Reading from the N-terminus, the 407-residue chain is Arylacetamide deacetylase-like 4 (407 aa).

Residues 1–4 lie on the Cytoplasmic side of the membrane; that stretch reads MAVP. A helical; Signal-anchor for type II membrane protein transmembrane segment spans residues 5 to 25; the sequence is WLVLLLALPIFFLGVFVWAVF. Topologically, residues 26–407 are lumenal; that stretch reads EHFLTTDIPA…NAVVSYIKGI (382 aa). The Involved in the stabilization of the negatively charged intermediate by the formation of the oxyanion hole signature appears at 119 to 121; it reads HGG. Asn-168 carries an N-linked (GlcNAc...) asparagine glycan. Ser-193 is a catalytic residue. N-linked (GlcNAc...) asparagine glycosylation occurs at Asn-269. Catalysis depends on residues Asp-347 and His-377.

Belongs to the 'GDXG' lipolytic enzyme family.

It is found in the membrane. This is Arylacetamide deacetylase-like 4 (AADACL4) from Homo sapiens (Human).